A 180-amino-acid chain; its full sequence is UPF0340 protein RBAM_034070 (180 aa).

The protein belongs to the UPF0340 family.

In Bacillus velezensis (strain DSM 23117 / BGSC 10A6 / LMG 26770 / FZB42) (Bacillus amyloliquefaciens subsp. plantarum), this protein is UPF0340 protein RBAM_034070.